A 231-amino-acid polypeptide reads, in one-letter code: DNA mismatch repair protein MutH (231 aa).

This sequence belongs to the MutH family.

It localises to the cytoplasm. Functionally, sequence-specific endonuclease that cleaves unmethylated GATC sequences. It is involved in DNA mismatch repair. The sequence is that of DNA mismatch repair protein MutH from Salmonella enteritidis PT4 (strain P125109).